The sequence spans 362 residues: 3-dehydroquinate synthase (362 aa).

Residues D71–K76, G105–D109, T129–T130, K142, and K151 contribute to the NAD(+) site. 3 residues coordinate Zn(2+): E184, H248, and H265.

This sequence belongs to the sugar phosphate cyclases superfamily. Dehydroquinate synthase family. It depends on Co(2+) as a cofactor. Requires Zn(2+) as cofactor. The cofactor is NAD(+).

The protein localises to the cytoplasm. It carries out the reaction 7-phospho-2-dehydro-3-deoxy-D-arabino-heptonate = 3-dehydroquinate + phosphate. The protein operates within metabolic intermediate biosynthesis; chorismate biosynthesis; chorismate from D-erythrose 4-phosphate and phosphoenolpyruvate: step 2/7. Its function is as follows. Catalyzes the conversion of 3-deoxy-D-arabino-heptulosonate 7-phosphate (DAHP) to dehydroquinate (DHQ). The polypeptide is 3-dehydroquinate synthase (Hamiltonella defensa subsp. Acyrthosiphon pisum (strain 5AT)).